The sequence spans 76 residues: MAKSKNHTNHNQNKKAHRNGIKRPLRKRHESTLGMDVKFLINQRYARKGNLSREESVKRYNERIASQKGKPKPVTL.

A compositionally biased stretch (basic residues) spans 1 to 29 (MAKSKNHTNHNQNKKAHRNGIKRPLRKRH). Disordered regions lie at residues 1-33 (MAKSKNHTNHNQNKKAHRNGIKRPLRKRHESTL) and 47-76 (RKGNLSREESVKRYNERIASQKGKPKPVTL). Phosphoserine is present on S31. Residues 51-62 (LSREESVKRYNE) are compositionally biased toward basic and acidic residues.

The protein belongs to the eukaryotic ribosomal protein eL29 family.

This Drosophila melanogaster (Fruit fly) protein is Large ribosomal subunit protein eL29 (RpL29).